The sequence spans 527 residues: MSALLREKFGREVILEKPRDRSFGHFATPIAFALAKELKQSPMKIADEIASSFEDNNIFSRVESVKGYLNFRLSENFLSEYGSWALENPQTFAKQEKKEKILLEFVSANPTGPLHIGHARGAVYGDTLFRLARHLGYDITAEYYVNDAGNQIDLLGLSIQLYGRENILHESVKYPESYYRGEYLAPLAHEAIKKFGLEILSDESRQKELALWAKDGVMEIIKKDLANTNIFFDTFVYESTLYDDWDRVMAKMGDGIYKKDDKLFIASSLKGDDDDRVVVREDARPTYLAGDIVYHNQKFERGYDHYINIWGADHHGYIARVKASVEFLGYDSAKLEVLLSQMVSLLKDGEPYKMSKRAGNVILMSDIVEEIGSDALRFIFASKKSDTALEFDLAEFKKQDSSNPIFYIQYAHARIKTIIAKSDLSHDEIMSATLKNLDESADMLMFDALLLPEIVEDAFISRQVQKLPEYLKSLAASLHKFYYDCRIIGTADEAKLLKLLMLVGLSLKTGLALMGIEAKDYMSKEEE.

The short motif at 108 to 118 (ANPTGPLHIGH) is the 'HIGH' region element.

It belongs to the class-I aminoacyl-tRNA synthetase family. In terms of assembly, monomer.

The protein resides in the cytoplasm. The enzyme catalyses tRNA(Arg) + L-arginine + ATP = L-arginyl-tRNA(Arg) + AMP + diphosphate. This is Arginine--tRNA ligase from Sulfurimonas denitrificans (strain ATCC 33889 / DSM 1251) (Thiomicrospira denitrificans (strain ATCC 33889 / DSM 1251)).